The chain runs to 891 residues: DNA mismatch repair protein MutS (891 aa).

634–641 (GPNMGGKS) lines the ATP pocket.

The protein belongs to the DNA mismatch repair MutS family.

In terms of biological role, this protein is involved in the repair of mismatches in DNA. It is possible that it carries out the mismatch recognition step. This protein has a weak ATPase activity. The chain is DNA mismatch repair protein MutS from Burkholderia pseudomallei (strain 668).